Reading from the N-terminus, the 809-residue chain is Protein TOC75, chloroplastic (809 aa).

Over residues 1–17 (MRTSVIPNRLTPTLTTH) the composition is skewed to polar residues. Residues 1–35 (MRTSVIPNRLTPTLTTHPSRRRNDHITTRTSSLKC) constitute a chloroplast transit peptide. Positions 1-44 (MRTSVIPNRLTPTLTTHPSRRRNDHITTRTSSLKCHLSPSSGDN) are disordered. A chloroplast; outer membrane-targeting transit peptide spans 36–131 (HLSPSSGDNN…RILSPARAIA (96 aa)). The Chloroplast intermembrane portion of the chain corresponds to 132 to 143 (DEPKSEDWDSHE). A beta stranded transmembrane segment spans residues 144 to 152 (LPADITVLL). Residues 153-160 (GRLSGFKK) are Cytoplasmic-facing. Residues 161–169 (YKISDILFF) form a beta stranded membrane-spanning segment. The Chloroplast intermembrane segment spans residues 170–225 (DRNKKSKVETQDSFLDMVSLKPGGVYTKAQLQKELESLATCGMFEKVDMEGKTNAD). Residues 226 to 234 (GSLGLTISF) form a beta stranded membrane-spanning segment. Residues 235–247 (AESMWERADRFRC) are Cytoplasmic-facing. A beta stranded membrane pass occupies residues 248 to 254 (INVGLMG). Residues 255 to 357 (QSKPVEMDPD…VVCEVVEGDI (103 aa)) lie on the Chloroplast intermembrane side of the membrane. The beta stranded transmembrane segment at 358 to 365 (TKLSIQYL) threads the bilayer. Residues 366–410 (DKLGNVVEGNTEGPVVQRELPKQLLPGHTFNIEAGKQALRNINSL) are Cytoplasmic-facing. Residues 411–418 (ALFSNIEV) traverse the membrane as a beta stranded segment. The Chloroplast intermembrane segment spans residues 419–427 (NPRPDEMNE). A beta stranded membrane pass occupies residues 428–436 (GSIIVEIKL). The Cytoplasmic segment spans residues 437-442 (KELEQK). The beta stranded transmembrane segment at 443–452 (SAEVSTEWSI) threads the bilayer. At 453–464 (VPGRGGRPTLAS) the chain is on the chloroplast intermembrane side. A beta stranded transmembrane segment spans residues 465–473 (LQPGGTITF). Topologically, residues 474–500 (EHRNLQGLNRSLTGSVTTSNFLNPQDD) are cytoplasmic. The beta stranded transmembrane segment at 501 to 509 (LAFKMEYAH) threads the bilayer. The Chloroplast intermembrane segment spans residues 510–553 (PYLDGVDNPRNRTLRVSCFNSRKLSPVFTGGPGVDEVPSIWVDR). The chain crosses the membrane as a beta stranded span at residues 554 to 561 (AGVKANIT). Residues 562–569 (ENFSRQSK) lie on the Cytoplasmic side of the membrane. Residues 570–577 (FTYGLVME) traverse the membrane as a beta stranded segment. Residues 578 to 684 (EIITRDESNH…VEEGAGKSPP (107 aa)) lie on the Chloroplast intermembrane side of the membrane. Residues 685–693 (PVLVLHGHY) traverse the membrane as a beta stranded segment. Topologically, residues 694 to 705 (GGCVGDLPSYDA) are cytoplasmic. A beta stranded membrane pass occupies residues 706–714 (FTLGGPYSV). At 715–776 (RGYNMGEIGA…VYRRMGQGSS (62 aa)) the chain is on the chloroplast intermembrane side. Residues 777–783 (YGAGMKL) form a beta stranded membrane-spanning segment. Residues 784–797 (GLVRAEYAVDHNSG) are Cytoplasmic-facing. Residues 798 to 805 (TGAVFFRF) traverse the membrane as a beta stranded segment. Residues 806–809 (GERF) are Chloroplast intermembrane-facing.

The protein belongs to the TOC75 family. Part of the TOC core complex that includes a protein for the specific recognition of transit peptides surrounded by a ring composed of four proteins forming translocation channels, and four to five GTP-binding proteins providing energy. This core complex can interact with components of the TIC complex to form a larger import complex. Chloroplastic protein precursors such as prSS (precursor of the RuBisCO small subunit) also interact with these complexes. TOC75 interacts with OEP14, TOC34/OEP34, TOC86/OEP86, TIC55, TIC110/IEP110 and CLPC. In terms of tissue distribution, mostly expressed in young leaves, also present in old leaves, roots and stems (at protein level).

The protein localises to the plastid. The protein resides in the chloroplast outer membrane. Functionally, mediates the insertion of proteins targeted to the outer membrane of chloroplasts. Required for the import of protein precursors into chloroplasts. Forms the voltage-dependent preprotein translocation channels (hydrophilic beta barrel) of the TOC complex in the chloroplastic outer membrane. The narrowest inner diameter of this channel is approximately 14 Angstroms. This is Protein TOC75, chloroplastic (TOC75) from Pisum sativum (Garden pea).